The primary structure comprises 447 residues: Asparagine--tRNA ligase (447 aa).

Belongs to the class-II aminoacyl-tRNA synthetase family. In terms of assembly, homodimer.

It is found in the cytoplasm. The enzyme catalyses tRNA(Asn) + L-asparagine + ATP = L-asparaginyl-tRNA(Asn) + AMP + diphosphate + H(+). This is Asparagine--tRNA ligase from Lactococcus lactis subsp. cremoris (strain SK11).